The sequence spans 301 residues: Transposase InsD for insertion element IS2D (301 aa).

One can recognise an Integrase catalytic domain in the interval 106 to 289 (KPAVPPSKRA…SPREYLRQRA (184 aa)).

Its function is as follows. Involved in the transposition of the insertion sequence IS2. In Escherichia coli (strain K12), this protein is Transposase InsD for insertion element IS2D (insD2).